Consider the following 1707-residue polypeptide: Latrophilin Cirl (1707 aa).

Residues 1 to 767 (MLPTILSISY…LFTMFDGNMR (767 aa)) are Extracellular-facing. Residues 25–114 (ACEGKKLTIE…KYLEAHYQCI (90 aa)) form the SUEL-type lectin domain. Asparagine 142 is a glycosylation site (N-linked (GlcNAc...) asparagine). Positions 176–301 (GLFNVPPQHT…TAASGAVVPG (126 aa)) are disordered. Composition is skewed to polar residues over residues 185–198 (TAVTHSTPSSSTTA) and 256–265 (NATSPSNTRI). Residue asparagine 256 is glycosylated (N-linked (GlcNAc...) asparagine). A compositionally biased stretch (low complexity) spans 275 to 285 (DDGTLLTTKSS). N-linked (GlcNAc...) asparagine glycans are attached at residues asparagine 302, asparagine 341, asparagine 398, asparagine 655, asparagine 703, and asparagine 730. A disordered region spans residues 376–400 (YDEYDDDPSSTTPAPNGGDCLHNSS). The GAIN-B domain occupies 561-754 (RSVVQKVKNI…AILMDVVDEH (194 aa)). Disulfide bonds link cysteine 709/cysteine 736 and cysteine 724/cysteine 738. Positions 709 to 754 (CVFWNYIDHAWSANGCSLESTNRTHSVCSCNHLTNFAILMDVVDEH) are GPS. A helical transmembrane segment spans residues 768–788 (IFIYISIGICVVFIVIALLTL). The Cytoplasmic segment spans residues 789 to 801 (KLFNGVFVKSART). Residues 802–822 (SIYTSIYLCLLAIELLFLLGI) traverse the membrane as a helical segment. Over 823–828 (EQTETS) the chain is Extracellular. Residues 829–849 (IFCGFITIFLHCAILSGTAWF) form a helical membrane-spanning segment. The Cytoplasmic segment spans residues 850–875 (CYEAFHSYSTLTSDELLLEVDQTPKV). The helical transmembrane segment at 876 to 896 (NCYYLLSYGLSLSVVAISLVI) threads the bilayer. Topologically, residues 897-920 (DPSTYTQNDYCVLMEANALFYATF) are extracellular. A helical transmembrane segment spans residues 921–941 (VIPVLVFFVAAIGYTFLSWII). At 942–968 (LCRKSRTGLKTKEHTRLASVRFDIRCS) the chain is on the cytoplasmic side. A helical membrane pass occupies residues 969-989 (FVFLLLLSAVWCSSYFYLRGA). Residues 990–999 (KMDDDTADVY) lie on the Extracellular side of the membrane. The helical transmembrane segment at 1000–1020 (GYCFICFNTLLGLYIFVFHCI) threads the bilayer. The Cytoplasmic portion of the chain corresponds to 1021–1707 (QNEKIRREYR…VRCYLEPLAK (687 aa)). Residue serine 1156 is modified to Phosphoserine. Disordered regions lie at residues 1169 to 1188 (AHKQQQQQQQQQQGPLGEGY) and 1236 to 1260 (KPNSGQHGKKKRGAGGVPASPSGSL). A compositionally biased stretch (low complexity) spans 1172-1181 (QQQQQQQQQQ). Residues serine 1255 and serine 1262 each carry the phosphoserine modification. A compositionally biased stretch (low complexity) spans 1316 to 1326 (QQLHQQQQQQL). Disordered regions lie at residues 1316 to 1335 (QQLHQQQQQQLSSDEEQVEQ), 1450 to 1538 (GGGS…SDER), 1563 to 1582 (APLDYGALPPGSGPQPEHNG), and 1612 to 1687 (GGRL…QQRH). Residues serine 1327 and serine 1328 each carry the phosphoserine modification. Low complexity predominate over residues 1456–1481 (GGSVSSRSQQQQLKKQQQQQSLAQQR). 2 stretches are compositionally biased toward acidic residues: residues 1489 to 1503 (DDDDDEEEEEDEEAT) and 1513 to 1526 (CDEDEEEDESDLED). Over residues 1635–1650 (QTPAQKRQQLQKLSPQ) the composition is skewed to polar residues. Low complexity predominate over residues 1651–1673 (STTSSSSHTSHSNPNPHPLQLTH). The span at 1674-1686 (PHPHQHPPHHQQR) shows a compositional bias: basic residues.

This sequence belongs to the G-protein coupled receptor 2 family. LN-TM7 subfamily. Forms a heterodimer, consisting of a large extracellular region non-covalently linked to a seven-transmembrane moiety. Post-translationally, proteolytically cleaved into 2 subunits, an extracellular subunit and a seven-transmembrane subunit.

The protein localises to the cell membrane. The polypeptide is Latrophilin Cirl (Drosophila yakuba (Fruit fly)).